Reading from the N-terminus, the 1270-residue chain is Myosin-1 (1270 aa).

The segment at 1–40 is disordered; it reads MGHSRRPAGGEKKSRGFGRSKAAADVGDGRQAGKPQVKKA. The 680-residue stretch at 50-729 folds into the Myosin motor domain; that stretch reads IGVSDLTLLS…TLFALETMRD (680 aa). 143 to 150 is a binding site for ATP; the sequence is GESGAGKT. Phosphoserine is present on Ser371. Residues 418–500 are actin-binding; it reads SIGILDIYGF…PGVFAALNDA (83 aa). 2 consecutive IQ domains span residues 733-753 and 754-779; these read HNMAIRIQRAWRNYLRYRIEC and AIRIQRFWRRMTGGLEFIKLRDQGHQ. One can recognise a TH1 domain in the interval 787-980; that stretch reads RRRMSLLGSR…TIHTSAGEPP (194 aa). Disordered stretches follow at residues 960-1102 and 1144-1270; these read GASN…VLYD and PEAY…DDEW. The segment covering 963-974 has biased composition (polar residues); sequence NVDSYKSSTIHT. Positions 1023 to 1058 are enriched in pro residues; the sequence is ARQPMPQPTPQPAAVQPPPAPRPAVSPAAQPRPVPQ. Residues 1059–1078 show a composition bias toward low complexity; it reads PVAAVAAAQHTRNASSSSTR. Positions 1079–1088 are enriched in pro residues; that stretch reads APPPPPPATP. The 62-residue stretch at 1092–1153 folds into the SH3 domain; the sequence is QRKPMAKVLY…PEAYLEEQVA (62 aa). The span at 1157–1167 shows a compositional bias: pro residues; the sequence is KPAPPPPPPAA. 2 stretches are compositionally biased toward low complexity: residues 1168–1186 and 1238–1252; these read PRASPVPATNGAAAAVAAK and NSASNASLAGGLAEA.

The protein belongs to the TRAFAC class myosin-kinesin ATPase superfamily. Myosin family. Post-translationally, phosphorylation of the TEDS site (Ser-371) is required for the polarization of the actin cytoskeleton. Phosphorylation probably activates the myosin-I ATPase activity.

It localises to the cytoplasm. Its subcellular location is the cytoskeleton. It is found in the actin patch. Its function is as follows. Type-I myosin implicated in the organization of the actin cytoskeleton. Required for proper actin cytoskeleton polarization. At the cell cortex, assembles in patch-like structures together with proteins from the actin-polymerizing machinery and promotes actin assembly. Functions as actin nucleation-promoting factor (NPF) for the Arp2/3 complex. Plays an important role in polarized growth, spore germination, hyphal morphogenesis, and septal wall formation. The chain is Myosin-1 (myoA) from Aspergillus niger (strain ATCC MYA-4892 / CBS 513.88 / FGSC A1513).